Consider the following 778-residue polypeptide: Probable protein kinase DDB_G0291133 (778 aa).

The segment at 129–162 (LSINNNNNNNNNNGGYKIPSSVNKNSNNYNSNSN) is disordered. The Protein kinase domain maps to 177–462 (FDVVCKLGSG…LDQILLNENI (286 aa)). Residues 183-191 (LGSGSFSDV) and Lys206 contribute to the ATP site. The active-site Proton acceptor is the Asp303. 2 residues coordinate Mg(2+): Asn308 and Asp321. Disordered stretches follow at residues 478–509 (NIENDNNNNNNTDNNNNNNTDNINNDNNDDNN), 562–697 (HFVR…GFYG), and 757–778 (SHPQESDKMSPRNLLSLFQETN). A compositionally biased stretch (acidic residues) spans 578–590 (SDEEEDDDDDDDS). Over residues 599-651 (SLNNLNNSSSNIGISESNSNNSFSSILEENNESSSSSPLPSLSFSRRLSTSSL) the composition is skewed to low complexity. Polar residues predominate over residues 652–670 (VTTISPKPNFNTSGNKLFS). A compositionally biased stretch (low complexity) spans 671 to 693 (NENNNSNNNNNNNNNNQNNNNNN). Residues 757–766 (SHPQESDKMS) are compositionally biased toward basic and acidic residues.

Belongs to the protein kinase superfamily. Ser/Thr protein kinase family. WEE1 subfamily.

The catalysed reaction is L-seryl-[protein] + ATP = O-phospho-L-seryl-[protein] + ADP + H(+). It catalyses the reaction L-threonyl-[protein] + ATP = O-phospho-L-threonyl-[protein] + ADP + H(+). The chain is Probable protein kinase DDB_G0291133 from Dictyostelium discoideum (Social amoeba).